The sequence spans 369 residues: Epoxyqueuosine reductase (369 aa).

Aspartate 135 serves as the catalytic Proton donor. The 4Fe-4S ferredoxin-type domain occupies 177–209 (IPLPVDEPSENQCGKCTACITSCPTNAIVAEGV). Cysteine 189, cysteine 192, cysteine 195, cysteine 199, cysteine 215, cysteine 242, cysteine 245, and cysteine 249 together coordinate [4Fe-4S] cluster.

The protein belongs to the QueG family. As to quaternary structure, monomer. The cofactor is cob(II)alamin. Requires [4Fe-4S] cluster as cofactor.

The protein localises to the cytoplasm. It catalyses the reaction epoxyqueuosine(34) in tRNA + AH2 = queuosine(34) in tRNA + A + H2O. It functions in the pathway tRNA modification; tRNA-queuosine biosynthesis. Catalyzes the conversion of epoxyqueuosine (oQ) to queuosine (Q), which is a hypermodified base found in the wobble positions of tRNA(Asp), tRNA(Asn), tRNA(His) and tRNA(Tyr). This Vibrio cholerae serotype O1 (strain ATCC 39315 / El Tor Inaba N16961) protein is Epoxyqueuosine reductase.